The sequence spans 206 residues: Small ribosomal subunit protein uS4 (206 aa).

The 66-residue stretch at 96–161 (RRLDNVVYRM…QGRIQAALAL (66 aa)) folds into the S4 RNA-binding domain.

Belongs to the universal ribosomal protein uS4 family. Part of the 30S ribosomal subunit. Contacts protein S5. The interaction surface between S4 and S5 is involved in control of translational fidelity.

Its function is as follows. One of the primary rRNA binding proteins, it binds directly to 16S rRNA where it nucleates assembly of the body of the 30S subunit. In terms of biological role, with S5 and S12 plays an important role in translational accuracy. This Legionella pneumophila (strain Paris) protein is Small ribosomal subunit protein uS4.